A 562-amino-acid chain; its full sequence is Potassium-transporting ATPase potassium-binding subunit (562 aa).

A run of 12 helical transmembrane segments spans residues phenylalanine 6–phenylalanine 26, tyrosine 62–methionine 82, glycine 132–isoleucine 152, valine 170–valine 190, phenylalanine 253–valine 273, leucine 283–leucine 303, phenylalanine 327–valine 347, alanine 356–valine 376, glycine 379–glycine 399, methionine 416–isoleucine 436, leucine 483–isoleucine 503, and leucine 526–alanine 546.

The protein belongs to the KdpA family. As to quaternary structure, the system is composed of three essential subunits: KdpA, KdpB and KdpC.

It is found in the cell inner membrane. Functionally, part of the high-affinity ATP-driven potassium transport (or Kdp) system, which catalyzes the hydrolysis of ATP coupled with the electrogenic transport of potassium into the cytoplasm. This subunit binds the periplasmic potassium ions and delivers the ions to the membrane domain of KdpB through an intramembrane tunnel. This chain is Potassium-transporting ATPase potassium-binding subunit, found in Serratia proteamaculans (strain 568).